The sequence spans 120 residues: Large ribosomal subunit protein bL12 (120 aa).

This sequence belongs to the bacterial ribosomal protein bL12 family. Homodimer. Part of the ribosomal stalk of the 50S ribosomal subunit. Forms a multimeric L10(L12)X complex, where L10 forms an elongated spine to which 2 to 4 L12 dimers bind in a sequential fashion. Binds GTP-bound translation factors.

Forms part of the ribosomal stalk which helps the ribosome interact with GTP-bound translation factors. Is thus essential for accurate translation. The polypeptide is Large ribosomal subunit protein bL12 (Pseudoalteromonas translucida (strain TAC 125)).